The following is a 118-amino-acid chain: Large ribosomal subunit protein bL20 (118 aa).

The protein belongs to the bacterial ribosomal protein bL20 family.

Binds directly to 23S ribosomal RNA and is necessary for the in vitro assembly process of the 50S ribosomal subunit. It is not involved in the protein synthesizing functions of that subunit. In Desulforamulus reducens (strain ATCC BAA-1160 / DSM 100696 / MI-1) (Desulfotomaculum reducens), this protein is Large ribosomal subunit protein bL20.